The sequence spans 95 residues: MKKYEVMYIIRPNIDEESKKAVIERFNNVLTSNGAEITGTKDWGKRRLAYEINDFRDGFYQILNVQSEAAAVAEFDRLAKISDDIIRHIVVKEEE.

The protein belongs to the bacterial ribosomal protein bS6 family.

Binds together with bS18 to 16S ribosomal RNA. The chain is Small ribosomal subunit protein bS6 from Bacillus velezensis (strain DSM 23117 / BGSC 10A6 / LMG 26770 / FZB42) (Bacillus amyloliquefaciens subsp. plantarum).